The chain runs to 305 residues: UDP-N-acetylenolpyruvoylglucosamine reductase (305 aa).

Positions 33 to 198 constitute an FAD-binding PCMH-type domain; it reads RVGGPAQVLF…TGGTFRGRRA (166 aa). Arg178 is a catalytic residue. The active-site Proton donor is Ser227. The active site involves Glu297.

It belongs to the MurB family. Requires FAD as cofactor.

It localises to the cytoplasm. The catalysed reaction is UDP-N-acetyl-alpha-D-muramate + NADP(+) = UDP-N-acetyl-3-O-(1-carboxyvinyl)-alpha-D-glucosamine + NADPH + H(+). It participates in cell wall biogenesis; peptidoglycan biosynthesis. Cell wall formation. The sequence is that of UDP-N-acetylenolpyruvoylglucosamine reductase from Nitrobacter hamburgensis (strain DSM 10229 / NCIMB 13809 / X14).